We begin with the raw amino-acid sequence, 439 residues long: Hemagglutinin-esterase (439 aa).

An N-terminal signal peptide occupies residues 1–22; the sequence is MGSMCIAMAPRTLLLLIGCQLA. The esterase domain 1 stretch occupies residues 12–132; that stretch reads TLLLLIGCQL…DNKRWMGNKA (121 aa). Topologically, residues 23-407 are virion surface; that stretch reads LGFNEPLNVV…PVCLYDPLPV (385 aa). Ser45 functions as the Nucleophile in the catalytic mechanism. Cysteines 49 and 70 form a disulfide. Asn94, Asn152, Asn196, Asn246, and Asn316 each carry an N-linked (GlcNAc...) asparagine; by host glycan. Cysteines 118 and 167 form a disulfide. Residues 133 to 281 form a receptor binding region; the sequence is RFYALVYKKM…GNYKAVSLEY (149 aa). Disulfide bonds link Cys202/Cys291 and Cys210/Cys264. The esterase domain 2 stretch occupies residues 282–395; sequence LLTIPSKAIC…QCPTAANIEF (114 aa). Cys322 and Cys327 are joined by a disulfide. Asn331 and Asn337 each carry an N-linked (GlcNAc...) asparagine; by host glycan. Residues Asp342 and His345 each act as charge relay system in the active site. N-linked (GlcNAc...) asparagine; by host glycosylation is found at Asn360 and Asn374. The cysteines at positions 363 and 387 are disulfide-linked. The helical transmembrane segment at 408–428 threads the bilayer; sequence ILLGVLLGIAVLIIVFLLFYF. Topologically, residues 429-439 are intravirion; sequence MTDSGVRLHEA.

It belongs to the influenza type C/coronaviruses hemagglutinin-esterase family. As to quaternary structure, homodimer; disulfide-linked. Forms a complex with the M protein in the pre-Golgi. Associates then with S-M complex to form a ternary complex S-M-HE. Post-translationally, N-glycosylated in the host RER.

The protein localises to the virion membrane. It localises to the host cell membrane. The catalysed reaction is N-acetyl-9-O-acetylneuraminate + H2O = N-acetylneuraminate + acetate + H(+). It carries out the reaction N-acetyl-4-O-acetylneuraminate + H2O = N-acetylneuraminate + acetate + H(+). Its function is as follows. Structural protein that makes short spikes at the surface of the virus. Contains receptor binding and receptor-destroying activities. Mediates de-O-acetylation of N-acetyl-4-O-acetylneuraminic acid, which is probably the receptor determinant recognized by the virus on the surface of erythrocytes and susceptible cells. This receptor-destroying activity is important for virus release as it probably helps preventing self-aggregation and ensures the efficient spread of the progeny virus from cell to cell. May serve as a secondary viral attachment protein for initiating infection, the spike protein being the major one. May become a target for both the humoral and the cellular branches of the immune system. This is Hemagglutinin-esterase from Puffinosis coronavirus (PV).